We begin with the raw amino-acid sequence, 112 residues long: Large ribosomal subunit protein mL53 (112 aa).

The protein belongs to the mitochondrion-specific ribosomal protein mL53 family. In terms of assembly, component of the mitochondrial ribosome large subunit (39S) which comprises a 16S rRNA and about 50 distinct proteins.

The protein resides in the mitochondrion. In Bos taurus (Bovine), this protein is Large ribosomal subunit protein mL53 (MRPL53).